The chain runs to 299 residues: Palmitoyltransferase ZDHHC3 (299 aa).

Topologically, residues Met-1–Cys-47 are cytoplasmic. Residue Tyr-18 is modified to Phosphotyrosine. The helical transmembrane segment at Ala-48–Ile-68 threads the bilayer. The Lumenal segment spans residues Pro-69–Asp-72. Residues Tyr-73–Ser-93 traverse the membrane as a helical segment. At His-94–Tyr-171 the chain is on the cytoplasmic side. Positions Lys-128–Lys-254 constitute a DHHC domain. A lipid anchor (S-palmitoyl cysteine) is attached at Cys-146. The active-site S-palmitoyl cysteine intermediate is the Cys-157. Residues Phe-172–Phe-192 form a helical membrane-spanning segment. Topologically, residues His-193–Val-214 are lumenal. Residues Ile-215–Phe-235 traverse the membrane as a helical segment. At Gly-236–Val-299 the chain is on the cytoplasmic side.

This sequence belongs to the DHHC palmitoyltransferase family. As to quaternary structure, monomer. Homooligomers. The monomeric form has a higher catalytic activity. Forms heterooligomers with ZDHHC7. Interacts with TNFRSF10A. Phosphorylation by FGFR1 and SRC probably regulates the palmitoyltransferase activity. Post-translationally, autopalmitoylated.

It is found in the golgi apparatus membrane. The catalysed reaction is L-cysteinyl-[protein] + hexadecanoyl-CoA = S-hexadecanoyl-L-cysteinyl-[protein] + CoA. The enzyme catalyses L-cysteinyl-[protein] + tetradecanoyl-CoA = S-tetradecanoyl-L-cysteinyl-[protein] + CoA. It catalyses the reaction L-cysteinyl-[protein] + octadecanoyl-CoA = S-octadecanoyl-L-cysteinyl-[protein] + CoA. Functionally, golgi-localized palmitoyltransferase that catalyzes the addition of palmitate onto various protein substrates. Has no stringent fatty acid selectivity and in addition to palmitate can also transfer onto target proteins myristate from tetradecanoyl-CoA and stearate from octadecanoyl-CoA. Plays an important role in G protein-coupled receptor signaling pathways involving GNAQ and potentially other heterotrimeric G proteins by regulating their dynamic association with the plasma membrane. Palmitoylates ITGA6 and ITGB4, thereby regulating the alpha-6/beta-4 integrin localization, expression and function in cell adhesion to laminin. Plays a role in the TRAIL-activated apoptotic signaling pathway most probably through the palmitoylation and localization to the plasma membrane of TNFRSF10A. In the brain, by palmitoylating the gamma subunit GABRG2 of GABA(A) receptors and regulating their postsynaptic accumulation, plays a role in synaptic GABAergic inhibitory function and GABAergic innervation. Palmitoylates the neuronal protein GAP43 which is also involved in the formation of GABAergic synapses. Palmitoylates NCDN thereby regulating its association with endosome membranes. Probably palmitoylates PRCD and is involved in its proper localization within the photoreceptor. Could mediate the palmitoylation of NCAM1 and regulate neurite outgrowth. Could palmitoylate DNAJC5 and regulate its localization to Golgi membranes. Also constitutively palmitoylates DLG4. May also palmitoylate SNAP25. Could palmitoylate the glutamate receptors GRIA1 and GRIA2 but this has not been confirmed in vivo. Could also palmitoylate the D(2) dopamine receptor DRD2. May also palmitoylate LAMTOR1, promoting its localization to lysosomal membranes. Palmitoylates the Toll-like receptor 9/TLR9 in the Golgi and thereby regulates TLR9 trafficking to endosomes. May palmitoylate CALHM1 and CALHM3 subunits of gustatory voltage-gated ion channels and modulate channel gating and kinetics. In Rattus norvegicus (Rat), this protein is Palmitoyltransferase ZDHHC3.